Here is a 147-residue protein sequence, read N- to C-terminus: uncharacterized protein (147 aa).

The region spanning 1-59 is the Response regulatory domain; it reads MGAELVKWVKSHKIDAHIITFVAKMPYIDSIKLLEAGAKGCVWKTSHPAKLNRAIDSIS. Residues 78–143 form the HTH luxR-type domain; sequence RYSSDNQLTN…ELIKTALRMG (66 aa). The H-T-H motif DNA-binding region spans 102 to 121; that stretch reads NKEIANFLQLSRKTVETHRL.

Overexpressed protein is phosphorylated in vitro by non-cognate histidine kinases BarA and UhpB.

This is an uncharacterized protein from Escherichia coli (strain K12).